Consider the following 491-residue polypeptide: Serralysin (491 aa).

A propeptide spanning residues 1–16 is cleaved from the precursor; it reads MGSFLLKKAVGLSNIS. His-186 provides a ligand contact to Zn(2+). The active site involves Glu-187. The Zn(2+) site is built by His-190, His-196, and Tyr-226. The Ca(2+) site is built by Arg-263, Gly-265, Asp-295, Gly-297, Gly-298, Asp-300, Thr-337, Glu-339, Gly-344, Gly-346, Asp-348, Asn-353, Ala-355, Asn-357, Gly-361, Gly-362, Gly-364, Asp-366, Gly-370, Gly-373, Asp-384, Gly-388, Gly-389, Gly-391, Asp-402, Asp-409, and Asp-419. Hemolysin-type calcium-binding repeat units follow at residues 342–359, 360–377, and 378–395; these read IGGF…DNTL, IGGE…NNTI, and YGGR…SNTF.

This sequence belongs to the peptidase M10B family. Requires Ca(2+) as cofactor. It depends on Zn(2+) as a cofactor.

The protein localises to the secreted. The catalysed reaction is Preferential cleavage of bonds with hydrophobic residues in P1'.. Its activity is regulated as follows. Ca(2+) increases protease activity. In terms of biological role, one of the virulence factors produced during swarmer cell differentiation of the bacteria, which seems to be associated with pathogenesis. The protease activity is limited to IgA1, IgA2, as well as IgG degradation. This is Serralysin (zapA) from Proteus mirabilis.